A 154-amino-acid polypeptide reads, in one-letter code: Deoxyuridine 5'-triphosphate nucleotidohydrolase (154 aa).

Residues 68–70, N81, and 85–87 contribute to the substrate site; these read RSG and TID.

The protein belongs to the dUTPase family. Mg(2+) serves as cofactor.

The catalysed reaction is dUTP + H2O = dUMP + diphosphate + H(+). It participates in pyrimidine metabolism; dUMP biosynthesis; dUMP from dCTP (dUTP route): step 2/2. In terms of biological role, this enzyme is involved in nucleotide metabolism: it produces dUMP, the immediate precursor of thymidine nucleotides and it decreases the intracellular concentration of dUTP so that uracil cannot be incorporated into DNA. The sequence is that of Deoxyuridine 5'-triphosphate nucleotidohydrolase from Acidiphilium cryptum (strain JF-5).